A 193-amino-acid chain; its full sequence is Ion-translocating oxidoreductase complex subunit A (193 aa).

Helical transmembrane passes span 5–25 (LMLF…FLGL), 39–59 (LGMG…AWLI), 62–82 (FILL…FIIA), 102–122 (LLGI…VALL), 134–154 (ALYG…FAAI), and 171–191 (SIAL…TGLV).

The protein belongs to the NqrDE/RnfAE family. As to quaternary structure, the complex is composed of six subunits: RnfA, RnfB, RnfC, RnfD, RnfE and RnfG.

It is found in the cell inner membrane. Functionally, part of a membrane-bound complex that couples electron transfer with translocation of ions across the membrane. In Sodalis glossinidius (strain morsitans), this protein is Ion-translocating oxidoreductase complex subunit A.